Here is a 201-residue protein sequence, read N- to C-terminus: UPF0301 protein Rleg2_0617 (201 aa).

The protein belongs to the UPF0301 (AlgH) family.

This Rhizobium leguminosarum bv. trifolii (strain WSM2304) protein is UPF0301 protein Rleg2_0617.